The following is a 108-amino-acid chain: UPF0060 membrane protein amb3269 (108 aa).

4 helical membrane passes run 4 to 24, 31 to 51, 59 to 79, and 85 to 105; these read IPTY…FWAW, PLWL…LTRI, AYAA…WAVE, and RWDT…IFGP.

It belongs to the UPF0060 family.

It localises to the cell inner membrane. This Paramagnetospirillum magneticum (strain ATCC 700264 / AMB-1) (Magnetospirillum magneticum) protein is UPF0060 membrane protein amb3269.